The sequence spans 108 residues: uncharacterized protein (108 aa).

To M.jannaschii MJ1245 and M.thermoautotrophicum MTH1110.

This is an uncharacterized protein from Methanocaldococcus jannaschii (strain ATCC 43067 / DSM 2661 / JAL-1 / JCM 10045 / NBRC 100440) (Methanococcus jannaschii).